We begin with the raw amino-acid sequence, 303 residues long: Porphobilinogen deaminase (303 aa).

Cys-240 carries the post-translational modification S-(dipyrrolylmethanemethyl)cysteine.

The protein belongs to the HMBS family. Monomer. Dipyrromethane is required as a cofactor.

The enzyme catalyses 4 porphobilinogen + H2O = hydroxymethylbilane + 4 NH4(+). The protein operates within porphyrin-containing compound metabolism; protoporphyrin-IX biosynthesis; coproporphyrinogen-III from 5-aminolevulinate: step 2/4. Functionally, tetrapolymerization of the monopyrrole PBG into the hydroxymethylbilane pre-uroporphyrinogen in several discrete steps. This chain is Porphobilinogen deaminase, found in Stenotrophomonas maltophilia (strain K279a).